A 1216-amino-acid polypeptide reads, in one-letter code: ATP-dependent DNA helicase Q4 (1216 aa).

Disordered regions lie at residues 72–100 (EAQE…QSLL) and 113–171 (NLKN…PRLG). Composition is skewed to polar residues over residues 86-100 (AATQ…QSLL) and 114-137 (LKNT…SLST). Ser179 and Ser181 each carry phosphoserine. The segment at 235 to 340 (SEVSVQSPEA…LHASPRPASL (106 aa)) is disordered. Polar residues-rich tracts occupy residues 248–262 (QPAQ…SINS) and 306–320 (TQVN…SNQA). A CCHC-type zinc finger spans residues 393–410 (DTCFRCGQFGHWASQCSQ). A disordered region spans residues 436–458 (AQRTGTASCHHSGEETQPAAPEL). The Helicase ATP-binding domain occupies 506-684 (IMRILSGIST…AQHLGIAGEF (179 aa)). 519–526 (LPTGAGKS) is an ATP binding site. Residues 627-630 (DEVH) carry the DEAH box motif. Residues 705–872 (DSDQALVTLL…AVKRLVQRVF (168 aa)) form the Helicase C-terminal domain. Zn(2+) contacts are provided by Cys875, Cys877, Cys906, and His909.

The protein belongs to the helicase family. RecQ subfamily. In terms of assembly, interacts with UBR1 and UBR2. Interacts with MCM10; this interaction regulates RECQL4 unwinding activity. Interacts with TOPBP1. The cofactor is Zn(2+).

The protein localises to the cytoplasm. The protein resides in the nucleus. The catalysed reaction is Couples ATP hydrolysis with the unwinding of duplex DNA by translocating in the 3'-5' direction.. It carries out the reaction ATP + H2O = ADP + phosphate + H(+). In terms of biological role, an ATP-dependent DNA helicase which unwinds dsDNA with a 3'-overhang in a 3'-5' direction. May play a role in development of the palate and the limbs. May modulate chromosome segregation. The chain is ATP-dependent DNA helicase Q4 (Recql4) from Mus musculus (Mouse).